The primary structure comprises 132 residues: Small ribosomal subunit protein uS8 (132 aa).

It belongs to the universal ribosomal protein uS8 family. Part of the 30S ribosomal subunit. Contacts proteins S5 and S12.

Its function is as follows. One of the primary rRNA binding proteins, it binds directly to 16S rRNA central domain where it helps coordinate assembly of the platform of the 30S subunit. This is Small ribosomal subunit protein uS8 from Bradyrhizobium sp. (strain ORS 278).